The following is a 237-amino-acid chain: Uridylate kinase (237 aa).

Position 12–15 (12–15) interacts with ATP; that stretch reads KLSG. The tract at residues 20–25 is involved in allosteric activation by GTP; sequence GAEGFG. Glycine 54 is a UMP binding site. ATP is bound by residues glycine 55 and arginine 59. UMP-binding positions include aspartate 74 and 135-142; that span reads TGSPFFTT. Residues threonine 162, tyrosine 168, and aspartate 171 each contribute to the ATP site.

The protein belongs to the UMP kinase family. As to quaternary structure, homohexamer.

Its subcellular location is the cytoplasm. It carries out the reaction UMP + ATP = UDP + ADP. Its pathway is pyrimidine metabolism; CTP biosynthesis via de novo pathway; UDP from UMP (UMPK route): step 1/1. Allosterically activated by GTP. Inhibited by UTP. Functionally, catalyzes the reversible phosphorylation of UMP to UDP. The chain is Uridylate kinase from Actinobacillus succinogenes (strain ATCC 55618 / DSM 22257 / CCUG 43843 / 130Z).